Reading from the N-terminus, the 458-residue chain is Ectonucleotide pyrophosphatase/phosphodiesterase family member 7 (458 aa).

Residues 1-21 (MRGPAVLLTVALATLLAPGAG) form the signal peptide. Over 22 to 433 (APVQSQGSQN…RPTLLPKGRS (412 aa)) the chain is Extracellular. Asp39 and Thr75 together coordinate Zn(2+). The segment at 72 to 78 (VTMTSPC) is required for enzyme activity. The active-site Nucleophile is Thr75. Asn96 is a binding site for substrate. Asn100, Asn121, Asn146, and Asn168 each carry an N-linked (GlcNAc...) asparagine glycan. Residues Asp199, His203, Asp246, and His247 each coordinate Zn(2+). Asn267 is a glycosylation site (N-linked (GlcNAc...) asparagine). His353 serves as a coordination point for Zn(2+). A helical transmembrane segment spans residues 434–454 (ALPPSSRPLLVMGLLGTVILL). At 455–458 (SEVA) the chain is on the cytoplasmic side.

This sequence belongs to the nucleotide pyrophosphatase/phosphodiesterase family. Zn(2+) serves as cofactor. Post-translationally, N-glycosylated; required for activity and transport to the plasma membrane. Detected in the colon (at protein level). Expressed in the duodenum, jejunum and liver and at low levels in the ileum. Expression was very low in the esophagus, stomach and colon.

The protein localises to the cell membrane. It carries out the reaction a sphingomyelin + H2O = phosphocholine + an N-acylsphing-4-enine + H(+). It catalyses the reaction 1-hexadecanoyl-sn-glycero-3-phosphocholine + H2O = 1-hexadecanoyl-sn-glycerol + phosphocholine + H(+). The catalysed reaction is a 1-O-alkyl-2-acetyl-sn-glycero-3-phosphocholine + H2O = a 1-O-alkyl-2-acetyl-sn-glycerol + phosphocholine + H(+). The enzyme catalyses 1-O-octadecyl-2-acetyl-sn-glycero-3-phosphocholine + H2O = 1-O-octadecyl-2-acetyl-sn-glycerol + phosphocholine + H(+). Its activity is regulated as follows. Inhibited in a dose dependent manner by ATP, imidazole, orthovanadate and zinc ion. Not inhibited by ADP, AMP and EDTA. Functionally, choline-specific phosphodiesterase that hydrolyzes sphingomyelin releasing the ceramide and phosphocholine and therefore is involved in sphingomyelin digestion, ceramide formation, and fatty acid (FA) absorption in the gastrointestinal tract. Also has phospholipase C activity and can also cleave phosphocholine from palmitoyl lyso-phosphatidylcholine and platelet-activating factor (PAF) leading to its inactivation. Does not have nucleotide pyrophosphatase activity. May promote cholesterol absorption by affecting the levels of sphingomyelin derived from either diet or endogenous sources, in the intestinal lumen. In Homo sapiens (Human), this protein is Ectonucleotide pyrophosphatase/phosphodiesterase family member 7.